The primary structure comprises 404 residues: Keratin, type I cuticular Ha3-I (404 aa).

Residues 1 to 56 (MSYSCGLPNLSCRTSCSSRPCVPPSCHGCTLPGACNIPANVSNCNWFCEGSFNGSE) form a head region. The 312-residue stretch at 56-367 (EKETMQFLND…SLLESEDCKL (312 aa)) folds into the IF rod domain. The interval 57 to 91 (KETMQFLNDRLASYLEKVRQLERDNAELENLIRER) is coil 1A. The tract at residues 92-102 (SQQQEPLVCAS) is linker 1. A coil 1B region spans residues 103–203 (YQSYFKTIEE…HEQEVNTLRC (101 aa)). The tract at residues 204–219 (QLGGRLNVEVDAAPAV) is linker 12. Residues 220-363 (DLNQVLNETR…NTYRSLLESE (144 aa)) form a coil 2 region. The interval 364–404 (DCKLPSNPCAITNACDKSTGPCISNPCGPRARCGPCNTFGY) is tail.

It belongs to the intermediate filament family.

The chain is Keratin, type I cuticular Ha3-I from Pan troglodytes (Chimpanzee).